A 540-amino-acid chain; its full sequence is 2-isopropylmalate synthase (540 aa).

The Pyruvate carboxyltransferase domain maps to valine 8–serine 271. Aspartate 17, histidine 208, histidine 210, and asparagine 244 together coordinate Mn(2+). The segment at glutamine 408–isoleucine 540 is regulatory domain.

The protein belongs to the alpha-IPM synthase/homocitrate synthase family. LeuA type 1 subfamily. In terms of assembly, homodimer. Mn(2+) is required as a cofactor.

It is found in the cytoplasm. The catalysed reaction is 3-methyl-2-oxobutanoate + acetyl-CoA + H2O = (2S)-2-isopropylmalate + CoA + H(+). It participates in amino-acid biosynthesis; L-leucine biosynthesis; L-leucine from 3-methyl-2-oxobutanoate: step 1/4. Functionally, catalyzes the condensation of the acetyl group of acetyl-CoA with 3-methyl-2-oxobutanoate (2-ketoisovalerate) to form 3-carboxy-3-hydroxy-4-methylpentanoate (2-isopropylmalate). This Prochlorococcus marinus (strain MIT 9303) protein is 2-isopropylmalate synthase.